The primary structure comprises 231 residues: NADH-ubiquinone oxidoreductase chain 4 (231 aa).

7 helical membrane passes run 1-21 (PIAGSMVLAAILLKLGGYGII), 34-54 (MFLPFIVLALWGAILANLTCL), 63-85 (IAYSSVSHMGLVAAAIIIQTPWG), 89-111 (AMALMIAHGFTSSALFCLANTTY), 128-148 (ILPMTSTWWLLANLMNIATPP), 169-189 (TIILLGLSMLITASYSLHMFL), and 211-231 (LLMTLHLIPLMMISMKPELVI).

The protein belongs to the complex I subunit 4 family.

The protein localises to the mitochondrion membrane. The enzyme catalyses a ubiquinone + NADH + 5 H(+)(in) = a ubiquinol + NAD(+) + 4 H(+)(out). Core subunit of the mitochondrial membrane respiratory chain NADH dehydrogenase (Complex I) that is believed to belong to the minimal assembly required for catalysis. Complex I functions in the transfer of electrons from NADH to the respiratory chain. The immediate electron acceptor for the enzyme is believed to be ubiquinone. In Porthidium ophryomegas (Slender hognose viper), this protein is NADH-ubiquinone oxidoreductase chain 4 (MT-ND4).